The sequence spans 892 residues: Translation initiation factor IF-2 (892 aa).

A disordered region spans residues Lys-88 to Pro-304. Basic and acidic residues-rich tracts occupy residues Val-93 to Val-159 and Asp-166 to Lys-216. Over residues Gly-254 to Lys-269 the composition is skewed to basic residues. A compositionally biased stretch (basic and acidic residues) spans His-270–Ala-282. Residues Pro-391–Lys-560 form the tr-type G domain. A G1 region spans residues Gly-400–Thr-407. Position 400–407 (Gly-400–Thr-407) interacts with GTP. The interval Gly-425–His-429 is G2. Residues Asp-446–Gly-449 form a G3 region. Residues Asp-446–His-450 and Asn-500–Asp-503 each bind GTP. Positions Asn-500–Asp-503 are G4. Residues Ser-536–Lys-538 are G5.

The protein belongs to the TRAFAC class translation factor GTPase superfamily. Classic translation factor GTPase family. IF-2 subfamily.

Its subcellular location is the cytoplasm. Its function is as follows. One of the essential components for the initiation of protein synthesis. Protects formylmethionyl-tRNA from spontaneous hydrolysis and promotes its binding to the 30S ribosomal subunits. Also involved in the hydrolysis of GTP during the formation of the 70S ribosomal complex. This Salmonella choleraesuis (strain SC-B67) protein is Translation initiation factor IF-2.